Consider the following 110-residue polypeptide: Neural hemoglobin (110 aa).

The Globin domain occupies Val2–Leu110. Residue His70 coordinates heme.

This sequence belongs to the globin family. In terms of assembly, homotetramer. Self-associates in the deoxy state. Seems to dissociate upon oxygenation.

In terms of biological role, acts as an oxygen store capable of sustaining neuronal activity in an anoxic environment for 5 to 30 minutes. The chain is Neural hemoglobin from Cerebratulus lacteus (Milky ribbon worm).